Reading from the N-terminus, the 333-residue chain is CRISPR-associated endonuclease Cas1 (333 aa).

Mn(2+) contacts are provided by glutamate 162, histidine 226, and glutamate 241.

The protein belongs to the CRISPR-associated endonuclease Cas1 family. As to quaternary structure, homodimer, forms a heterotetramer with a Cas2 homodimer. Mg(2+) serves as cofactor. Mn(2+) is required as a cofactor.

In terms of biological role, CRISPR (clustered regularly interspaced short palindromic repeat), is an adaptive immune system that provides protection against mobile genetic elements (viruses, transposable elements and conjugative plasmids). CRISPR clusters contain spacers, sequences complementary to antecedent mobile elements, and target invading nucleic acids. CRISPR clusters are transcribed and processed into CRISPR RNA (crRNA). Acts as a dsDNA endonuclease. Involved in the integration of spacer DNA into the CRISPR cassette. The sequence is that of CRISPR-associated endonuclease Cas1 from Nanoarchaeum equitans (strain Kin4-M).